Reading from the N-terminus, the 448-residue chain is Exodeoxyribonuclease 7 large subunit (448 aa).

The protein belongs to the XseA family. As to quaternary structure, heterooligomer composed of large and small subunits.

The protein localises to the cytoplasm. It is found in the nucleoid. It catalyses the reaction Exonucleolytic cleavage in either 5'- to 3'- or 3'- to 5'-direction to yield nucleoside 5'-phosphates.. In terms of biological role, bidirectionally degrades single-stranded DNA into large acid-insoluble oligonucleotides, which are then degraded further into small acid-soluble oligonucleotides. The chain is Exodeoxyribonuclease 7 large subunit from Bacillus subtilis (strain 168).